The primary structure comprises 274 residues: NH(3)-dependent NAD(+) synthetase (274 aa).

46–53 provides a ligand contact to ATP; that stretch reads GISGGQDS. D52 serves as a coordination point for Mg(2+). R140 lines the deamido-NAD(+) pocket. Position 160 (T160) interacts with ATP. Position 165 (E165) interacts with Mg(2+). Deamido-NAD(+)-binding residues include K173 and D180. Residues K189 and T211 each coordinate ATP. Residue 260–261 participates in deamido-NAD(+) binding; sequence HK.

The protein belongs to the NAD synthetase family. Homodimer.

It carries out the reaction deamido-NAD(+) + NH4(+) + ATP = AMP + diphosphate + NAD(+) + H(+). The protein operates within cofactor biosynthesis; NAD(+) biosynthesis; NAD(+) from deamido-NAD(+) (ammonia route): step 1/1. Its function is as follows. Catalyzes the ATP-dependent amidation of deamido-NAD to form NAD. Uses ammonia as a nitrogen source. The polypeptide is NH(3)-dependent NAD(+) synthetase (Streptococcus pneumoniae (strain Hungary19A-6)).